Consider the following 47-residue polypeptide: Photosystem II reaction center protein K (47 aa).

The propeptide occupies 1 to 10 (MALINFDLLA). The chain crosses the membrane as a helical span at residues 26 to 46 (LPLIPLFFFLLVFVWQAAVGF).

The protein belongs to the PsbK family. As to quaternary structure, PSII is composed of 1 copy each of membrane proteins PsbA, PsbB, PsbC, PsbD, PsbE, PsbF, PsbH, PsbI, PsbJ, PsbK, PsbL, PsbM, PsbT, PsbX, PsbY, Psb30/Ycf12, peripheral proteins PsbO, CyanoQ (PsbQ), PsbU, PsbV and a large number of cofactors. It forms dimeric complexes.

The protein localises to the cellular thylakoid membrane. One of the components of the core complex of photosystem II (PSII). PSII is a light-driven water:plastoquinone oxidoreductase that uses light energy to abstract electrons from H(2)O, generating O(2) and a proton gradient subsequently used for ATP formation. It consists of a core antenna complex that captures photons, and an electron transfer chain that converts photonic excitation into a charge separation. In Prochlorococcus marinus (strain NATL2A), this protein is Photosystem II reaction center protein K.